The chain runs to 349 residues: DNA replication and repair protein RecF (349 aa).

Position 30-37 (30-37) interacts with ATP; the sequence is GKNGSGKT.

Belongs to the RecF family.

It is found in the cytoplasm. Functionally, the RecF protein is involved in DNA metabolism; it is required for DNA replication and normal SOS inducibility. RecF binds preferentially to single-stranded, linear DNA. It also seems to bind ATP. The polypeptide is DNA replication and repair protein RecF (Francisella tularensis subsp. novicida (strain U112)).